The following is a 564-amino-acid chain: Ell-associated factor Eaf (564 aa).

Disordered regions lie at residues 179–255 and 270–564; these read SGPG…MITD and QANI…DDDD. Positions 186–205 are enriched in polar residues; the sequence is ENSTMRVSSKTKVSTGSRRN. Phosphoserine is present on S215. The segment covering 274 to 283 has biased composition (low complexity); the sequence is SGSSTGSSSG. Residues 297 to 309 show a composition bias toward basic residues; sequence GKQRQAHGKRQQI. Low complexity-rich tracts occupy residues 315-329, 343-387, and 409-420; these read PPVQ…QQQP, QQQQ…QQRP, and ASQSVAQAAAVL. The span at 438–453 shows a compositional bias: acidic residues; sequence DSSDSDSGSDSDDSTE. 3 stretches are compositionally biased toward low complexity: residues 463-505, 523-533, and 546-564; these read EQQQ…NQLP, QQPQPQPQQQQ, and NDLL…DDDD.

The protein belongs to the EAF family.

It localises to the nucleus. Promotes transcriptional elongation by Su(Tpl)/ELL. Essential for development. In Drosophila pseudoobscura pseudoobscura (Fruit fly), this protein is Ell-associated factor Eaf.